An 81-amino-acid polypeptide reads, in one-letter code: Large ribosomal subunit protein bL31 (81 aa).

Zn(2+)-binding residues include C16, C18, C38, and C41.

Belongs to the bacterial ribosomal protein bL31 family. Type A subfamily. Part of the 50S ribosomal subunit. Zn(2+) is required as a cofactor.

Its function is as follows. Binds the 23S rRNA. This Mycobacterium sp. (strain JLS) protein is Large ribosomal subunit protein bL31.